The sequence spans 142 residues: Virulence-associated membrane protein 1 (142 aa).

A signal peptide spans 1–20 (MRGILVALTAALIFCSLTPA). A helical transmembrane segment spans residues 59–79 (IAIAVGTALVTLVSAGVGGML).

Monomer.

It localises to the membrane. Functionally, during infection, may play a role in establishing and maintaining biotrophy; the formation of a tight interaction zone between the host and the pathogen. The protein is Virulence-associated membrane protein 1 of Mycosarcoma maydis (Corn smut fungus).